The sequence spans 428 residues: Putative G-protein coupled receptor F59B2.13 (428 aa).

Residues 1–30 (MSNNTTIPSKTATDICLTDRQMSLSVSSTE) are Extracellular-facing. Asn-3 and Asn-4 each carry an N-linked (GlcNAc...) asparagine glycan. The helical transmembrane segment at 31 to 51 (GVLIGTIIPILVLFGISGNIL) threads the bilayer. Residues 52–67 (NLTVLLAPNLRTRSNQ) are Cytoplasmic-facing. The chain crosses the membrane as a helical span at residues 68-88 (LLACLAVADIVSLVVILPHSM). Topologically, residues 89–110 (AHYETFETALWFRKFYGKYKFQ) are extracellular. Residues 111 to 131 (IIAMTNWSIATATWLVFVICL) traverse the membrane as a helical segment. Topologically, residues 132–154 (ERLIIIKYPLSVRKQAKFFTPRN) are cytoplasmic. The chain crosses the membrane as a helical span at residues 155-175 (VVTIIVVTTFILTSYNHVSHA). The Extracellular segment spans residues 176-222 (CAEKLFCNGTQYHVACLGIDSERWFRNEPNPNSEFMKSVVRVAPQVN). N-linked (GlcNAc...) asparagine glycosylation occurs at Asn-183. The chain crosses the membrane as a helical span at residues 223–243 (AIFVVLIPVVLVIIFNVMLIL). Residues 244-278 (TLRQRTKLFEPSKTIRGDSQFTQLQSKTEHKVTIT) lie on the Cytoplasmic side of the membrane. Residues 279 to 299 (VTAIVTCFTITQSPSAFVTFL) form a helical membrane-spanning segment. Residues 300–309 (SSYVHRDWVT) are Extracellular-facing. The chain crosses the membrane as a helical span at residues 310–330 (LSAICTILVVLGKALNFVLFC). Residues 331–428 (LSSASFRQRL…KEFRRGTSFV (98 aa)) lie on the Cytoplasmic side of the membrane.

The protein belongs to the G-protein coupled receptor 1 family.

The protein localises to the cell membrane. This Caenorhabditis elegans protein is Putative G-protein coupled receptor F59B2.13.